A 631-amino-acid chain; its full sequence is tRNA uridine 5-carboxymethylaminomethyl modification enzyme MnmG (631 aa).

FAD-binding positions include 13-18 (GGGHAG), Val-125, and Ser-180. Residue 273 to 287 (GPRYCPSIEDKVMRF) coordinates NAD(+). An FAD-binding site is contributed by Gln-370.

It belongs to the MnmG family. Homodimer. Heterotetramer of two MnmE and two MnmG subunits. The cofactor is FAD.

The protein localises to the cytoplasm. NAD-binding protein involved in the addition of a carboxymethylaminomethyl (cmnm) group at the wobble position (U34) of certain tRNAs, forming tRNA-cmnm(5)s(2)U34. The polypeptide is tRNA uridine 5-carboxymethylaminomethyl modification enzyme MnmG (Vibrio atlanticus (strain LGP32) (Vibrio splendidus (strain Mel32))).